The chain runs to 239 residues: Ribosomal RNA large subunit methyltransferase E (239 aa).

S-adenosyl-L-methionine is bound by residues G88, W90, D111, D127, and D151. K191 (proton acceptor) is an active-site residue.

Belongs to the class I-like SAM-binding methyltransferase superfamily. RNA methyltransferase RlmE family.

The protein localises to the cytoplasm. It carries out the reaction uridine(2552) in 23S rRNA + S-adenosyl-L-methionine = 2'-O-methyluridine(2552) in 23S rRNA + S-adenosyl-L-homocysteine + H(+). Functionally, specifically methylates the uridine in position 2552 of 23S rRNA at the 2'-O position of the ribose in the fully assembled 50S ribosomal subunit. This is Ribosomal RNA large subunit methyltransferase E from Bartonella bacilliformis (strain ATCC 35685 / KC583 / Herrer 020/F12,63).